The chain runs to 206 residues: MSETNGPFRIGIGGPVGSGKTALTDRLCKAMRERWNIAAITNDIYTKEDAEFLTRSAALAPERIMGVETGGCPHTAIREDASINLAAVDAMNARFPGLDLVFIESGGDNLAATFSPELADLTIYVIDVSAGDKIPRKGGPGITRSDLLVINKIDLAPLVEASLEVMDRDSRKMRGEKPFLFTNLKTNLGVAEIVAFIERQGGLSGV.

Position 14–21 (14–21) interacts with GTP; sequence GPVGSGKT.

The protein belongs to the SIMIBI class G3E GTPase family. UreG subfamily. As to quaternary structure, homodimer. UreD, UreF and UreG form a complex that acts as a GTP-hydrolysis-dependent molecular chaperone, activating the urease apoprotein by helping to assemble the nickel containing metallocenter of UreC. The UreE protein probably delivers the nickel.

Its subcellular location is the cytoplasm. Its function is as follows. Facilitates the functional incorporation of the urease nickel metallocenter. This process requires GTP hydrolysis, probably effectuated by UreG. The polypeptide is Urease accessory protein UreG (Methylocella silvestris (strain DSM 15510 / CIP 108128 / LMG 27833 / NCIMB 13906 / BL2)).